A 122-amino-acid polypeptide reads, in one-letter code: Small ribosomal subunit protein uS13 (122 aa).

Residues 95–122 (GLPVRGQRTHTNARTRKGPAKSIAGKKK) are disordered.

The protein belongs to the universal ribosomal protein uS13 family. Part of the 30S ribosomal subunit. Forms a loose heterodimer with protein S19. Forms two bridges to the 50S subunit in the 70S ribosome.

Located at the top of the head of the 30S subunit, it contacts several helices of the 16S rRNA. In the 70S ribosome it contacts the 23S rRNA (bridge B1a) and protein L5 of the 50S subunit (bridge B1b), connecting the 2 subunits; these bridges are implicated in subunit movement. Contacts the tRNAs in the A and P-sites. The polypeptide is Small ribosomal subunit protein uS13 (Nitrobacter winogradskyi (strain ATCC 25391 / DSM 10237 / CIP 104748 / NCIMB 11846 / Nb-255)).